We begin with the raw amino-acid sequence, 190 residues long: Outer-membrane lipoprotein LolB (190 aa).

An N-terminal signal peptide occupies residues 1-16 (MRLRFSLLLTVSLLAG). A lipid anchor (N-palmitoyl cysteine) is attached at cysteine 17. Residue cysteine 17 is the site of S-diacylglycerol cysteine attachment.

Belongs to the LolB family. In terms of assembly, monomer.

It is found in the cell outer membrane. In terms of biological role, plays a critical role in the incorporation of lipoproteins in the outer membrane after they are released by the LolA protein. The polypeptide is Outer-membrane lipoprotein LolB (Dechloromonas aromatica (strain RCB)).